The chain runs to 317 residues: Lipoyl synthase (317 aa).

Residues 1-28 (MDSQPQSKKAARGADKTARNPIPIIPAP) are disordered. 7 residues coordinate [4Fe-4S] cluster: cysteine 64, cysteine 69, cysteine 75, cysteine 90, cysteine 94, cysteine 97, and serine 304. Residues 76–293 (FGGGTATFMI…QRDGMAMGFR (218 aa)) enclose the Radical SAM core domain.

Belongs to the radical SAM superfamily. Lipoyl synthase family. [4Fe-4S] cluster is required as a cofactor.

The protein resides in the cytoplasm. It carries out the reaction [[Fe-S] cluster scaffold protein carrying a second [4Fe-4S](2+) cluster] + N(6)-octanoyl-L-lysyl-[protein] + 2 oxidized [2Fe-2S]-[ferredoxin] + 2 S-adenosyl-L-methionine + 4 H(+) = [[Fe-S] cluster scaffold protein] + N(6)-[(R)-dihydrolipoyl]-L-lysyl-[protein] + 4 Fe(3+) + 2 hydrogen sulfide + 2 5'-deoxyadenosine + 2 L-methionine + 2 reduced [2Fe-2S]-[ferredoxin]. It participates in protein modification; protein lipoylation via endogenous pathway; protein N(6)-(lipoyl)lysine from octanoyl-[acyl-carrier-protein]: step 2/2. Catalyzes the radical-mediated insertion of two sulfur atoms into the C-6 and C-8 positions of the octanoyl moiety bound to the lipoyl domains of lipoate-dependent enzymes, thereby converting the octanoylated domains into lipoylated derivatives. This is Lipoyl synthase from Acidithiobacillus ferrooxidans (strain ATCC 23270 / DSM 14882 / CIP 104768 / NCIMB 8455) (Ferrobacillus ferrooxidans (strain ATCC 23270)).